Reading from the N-terminus, the 257-residue chain is S-methyl-5'-thioadenosine phosphorylase (257 aa).

Residues S10 and 50 to 51 (RH) contribute to the phosphate site. Residue M180 participates in substrate binding. T181 contacts phosphate. A substrate-binding site is contributed by 204–206 (DYD).

The protein belongs to the PNP/MTAP phosphorylase family. MTAP subfamily. Homohexamer. Dimer of a homotrimer.

It catalyses the reaction S-methyl-5'-thioadenosine + phosphate = 5-(methylsulfanyl)-alpha-D-ribose 1-phosphate + adenine. It functions in the pathway amino-acid biosynthesis; L-methionine biosynthesis via salvage pathway; S-methyl-5-thio-alpha-D-ribose 1-phosphate from S-methyl-5'-thioadenosine (phosphorylase route): step 1/1. Functionally, catalyzes the reversible phosphorylation of S-methyl-5'-thioadenosine (MTA) to adenine and 5-methylthioribose-1-phosphate. Involved in the breakdown of MTA, a major by-product of polyamine biosynthesis. Responsible for the first step in the methionine salvage pathway after MTA has been generated from S-adenosylmethionine. Has broad substrate specificity with 6-aminopurine nucleosides as preferred substrates. The sequence is that of S-methyl-5'-thioadenosine phosphorylase (mntP) from Pyrococcus abyssi (strain GE5 / Orsay).